The chain runs to 245 residues: 1-(5-phosphoribosyl)-5-[(5-phosphoribosylamino)methylideneamino] imidazole-4-carboxamide isomerase (245 aa).

Aspartate 8 functions as the Proton acceptor in the catalytic mechanism. Aspartate 129 serves as the catalytic Proton donor.

The protein belongs to the HisA/HisF family.

It is found in the cytoplasm. The enzyme catalyses 1-(5-phospho-beta-D-ribosyl)-5-[(5-phospho-beta-D-ribosylamino)methylideneamino]imidazole-4-carboxamide = 5-[(5-phospho-1-deoxy-D-ribulos-1-ylimino)methylamino]-1-(5-phospho-beta-D-ribosyl)imidazole-4-carboxamide. Its pathway is amino-acid biosynthesis; L-histidine biosynthesis; L-histidine from 5-phospho-alpha-D-ribose 1-diphosphate: step 4/9. The polypeptide is 1-(5-phosphoribosyl)-5-[(5-phosphoribosylamino)methylideneamino] imidazole-4-carboxamide isomerase (Heliobacterium modesticaldum (strain ATCC 51547 / Ice1)).